The chain runs to 177 residues: O-acetyl-ADP-ribose deacetylase (177 aa).

The Macro domain maps to 1 to 175 (MKSRIHVLQG…LYNRLLTQQG (175 aa)). Residues 11 to 12 (DI), N25, 33 to 35 (GVD), and 122 to 126 (STGVY) each bind substrate. The Proton acceptor role is filled by D35.

Belongs to the MacroD-type family. YmdB subfamily. In terms of assembly, homodimer. Interacts with RNase III.

It carries out the reaction 3''-O-acetyl-ADP-D-ribose + H2O = ADP-D-ribose + acetate + H(+). The enzyme catalyses 2''-O-acetyl-ADP-D-ribose + H2O = ADP-D-ribose + acetate + H(+). Deacetylates O-acetyl-ADP ribose to yield ADP-ribose and free acetate. Down-regulates ribonuclease 3 (RNase III) activity. Acts by interacting directly with the region of the ribonuclease that is required for dimerization/activation. In Escherichia fergusonii (strain ATCC 35469 / DSM 13698 / CCUG 18766 / IAM 14443 / JCM 21226 / LMG 7866 / NBRC 102419 / NCTC 12128 / CDC 0568-73), this protein is O-acetyl-ADP-ribose deacetylase.